The following is a 587-amino-acid chain: MTEQTFILGKDAALEDSIAKFQQKLTALGFNIEEASWLNPVPNVWSVHIRDKDCPQCFSNGKGASKKAALASALGEYFERLSTNYFFADFYLGQEIANSDFVHYPNEKWFPIEDDALLPNGILDDYLLDYFBPNAELTPELLVDLQSGNYDRGIVAMPYVRQSDEQTVYIPQSIIANLYVSNGMSAGNTKFEARVQGLSEVFERYVKNKIIAEAISLPEIPKSVMDRYPSIQASIAKLEEEGFPIYAFDASLGGKYPVICVVLLNPNNGTCFSSFGAHPNFQVALERTVTELLQGRSLKDLDVFSPPSFNNDDVAEHANLETHFIDSSGLISWDLLKETPDYEFADWDFSGTTQEEYNNLMAIFRADEKEVYVMDYNHLDVYACRIIVPGMSDIYPADDLIYANNNMGMDWREILLDLPNWHHDAETYQELLEELDGQDIDDATRVREFIGIVAPKNSGWTTLRVGELKSMLHLALGELEQALDWANWTLNMNSSVFTTEPVNYYRTLISIIELHLDQNRDPAQYRAVFEKMYGKDAVKQAWAAVSEGGNPFYNLPASDENLKNFKEHQALLGAYGKLQKAKKENWK.

Positions 61 to 426 (GKGASKKAAL…DLPNWHHDAE (366 aa)) constitute a YcaO domain.

This is an uncharacterized protein from Haemophilus influenzae (strain ATCC 51907 / DSM 11121 / KW20 / Rd).